We begin with the raw amino-acid sequence, 736 residues long: Nucleoporin nup60 (736 aa).

Residues 1 to 46 (MSSGPIRTLHKGKAARNRTPYDRIAASKDGNHSNGPQTPSKSIFQR) form a disordered region. Residues 19–31 (TPYDRIAASKDGN) are compositionally biased toward basic and acidic residues. Residues 32-43 (HSNGPQTPSKSI) are compositionally biased toward polar residues. Phosphoserine occurs at positions 157, 159, 161, and 162. Disordered stretches follow at residues 178 to 210 (RAAA…NSAK), 295 to 321 (DTSF…KTPS), 338 to 519 (TPSI…PNET), 565 to 614 (AVTD…RSLF), and 647 to 701 (EQAE…FPKF). Polar residues-rich tracts occupy residues 196-210 (RTSS…NSAK) and 295-314 (DTSF…TTAN). Residues 375–397 (QIRPSSEKSEPEKKEPSAFETLE) are compositionally biased toward basic and acidic residues. The segment covering 456-473 (SATTDKPSPPVSSIFSFN) has biased composition (polar residues). 2 stretches are compositionally biased toward low complexity: residues 474–505 (APSA…TSFS) and 573–587 (EVSS…TMIS). Polar residues predominate over residues 588-597 (QPNTGFSFGS). Over residues 664-692 (EVEKPSAEGTNEHKQDATMTLEKTDKQGS) the composition is skewed to basic and acidic residues.

As to quaternary structure, component of the nuclear pore complex (NPC). NPC constitutes the exclusive means of nucleocytoplasmic transport. NPCs allow the passive diffusion of ions and small molecules and the active, nuclear transport receptor-mediated bidirectional transport of macromolecules such as proteins, RNAs, ribonucleoparticles (RNPs), and ribosomal subunits across the nuclear envelope.

The protein resides in the nucleus. It localises to the nuclear pore complex. It is found in the nucleus membrane. In terms of biological role, functions as a component of the nuclear pore complex (NPC). NPC components, collectively referred to as nucleoporins (NUPs), can play the role of both NPC structural components and of docking or interaction partners for transiently associated nuclear transport factors. Active directional transport is assured by both, a Phe-Gly (FG) repeat affinity gradient for these transport factors across the NPC and a transport cofactor concentration gradient across the nuclear envelope. This is Nucleoporin nup60 (nup60) from Schizosaccharomyces pombe (strain 972 / ATCC 24843) (Fission yeast).